The following is a 351-amino-acid chain: Histidine-rich glycoprotein (351 aa).

The signal sequence occupies residues 1 to 23; that stretch reads MFTSLKKVATFSFLVWISQYSGS. Positions 24–47 are excised as a propeptide; that stretch reads NSCSSSLVKHIPQTGSNLTFDRVL. Asn-40 is a glycosylation site (N-linked (GlcNAc...) asparagine). Over residues 57–91 the composition is skewed to basic and acidic residues; that stretch reads LHEEHHHHHPEEHHEPHHEEHHHHHPEEHHEPHHE. The disordered stretch occupies residues 57-351; sequence LHEEHHHHHP…DAHHHHHHHH (295 aa). A run of 6 repeats spans residues 59–74, 75–90, 91–107, 108–123, 124–138, and 139–153. A 2 X 16 AA tandem repeats region spans residues 59 to 90; it reads EEHHHHHPEEHHEPHHEEHHHHHPEEHHEPHH. The segment at 91-123 is 2 X 17 AA tandem repeats; the sequence is EEHHHHHPHPHHHHHHHPPHHHHHLGHHHHHHH. Basic residues predominate over residues 92 to 351; the sequence is EHHHHHPHPH…DAHHHHHHHH (260 aa). Residues 124 to 153 are 2 X 15 AA tandem repeats; that stretch reads AAHHHHHEEHHHHHHAAHHHHHEEHHHHHH. The interval 173–351 is 18 X 10 AA tandem repeats; that stretch reads APHHHHHHHH…DAHHHHHHHH (179 aa).

This chain is Histidine-rich glycoprotein, found in Plasmodium lophurae.